A 213-amino-acid chain; its full sequence is StAR-related lipid transfer protein 5 (213 aa).

The 213-residue stretch at 1–213 folds into the START domain; sequence MDPSWATQES…LQKAVRKFHH (213 aa).

As to expression, expressed in most tissues, with highest levels in liver and in kidney.

Its function is as follows. May be involved in the intracellular transport of sterols or other lipids. May bind cholesterol or other sterols. This chain is StAR-related lipid transfer protein 5 (Stard5), found in Mus musculus (Mouse).